Reading from the N-terminus, the 149-residue chain is Probable flagellum biosynthesis repressor protein FlbT (149 aa).

The protein belongs to the FlbT family.

Has a post-transcriptional repressor function in flagellum biogenesis. Associates with the 5'-UTR of fljK mRNA and promotes its degradation. This is Probable flagellum biosynthesis repressor protein FlbT from Allorhizobium ampelinum (strain ATCC BAA-846 / DSM 112012 / S4) (Agrobacterium vitis (strain S4)).